Reading from the N-terminus, the 460-residue chain is Cysteine--tRNA ligase (460 aa).

Zn(2+) is bound at residue cysteine 28. A 'HIGH' region motif is present at residues 30–40 (MTVYDYCHLGH). The Zn(2+) site is built by cysteine 209, histidine 234, and glutamate 238. Positions 266-270 (KMSKS) match the 'KMSKS' region motif. ATP is bound at residue lysine 269.

This sequence belongs to the class-I aminoacyl-tRNA synthetase family. Monomer. Requires Zn(2+) as cofactor.

Its subcellular location is the cytoplasm. It catalyses the reaction tRNA(Cys) + L-cysteine + ATP = L-cysteinyl-tRNA(Cys) + AMP + diphosphate. This Pseudomonas syringae pv. syringae (strain B728a) protein is Cysteine--tRNA ligase.